The chain runs to 428 residues: Putative F-box protein At3g22421 (428 aa).

The F-box domain occupies 4–50; the sequence is TTTISHLPTELLDEIISRVPLKSTRAVRLTCKNWDSLFKNRSFMKEE.

The chain is Putative F-box protein At3g22421 from Arabidopsis thaliana (Mouse-ear cress).